A 391-amino-acid polypeptide reads, in one-letter code: Argininosuccinate synthase (391 aa).

6-14 is an ATP binding site; it reads AYSGGLDTT. Tyr-84 is an L-citrulline binding site. Residue Gly-114 coordinates ATP. Thr-116, Asn-120, and Asp-121 together coordinate L-aspartate. Asn-120 is an L-citrulline binding site. L-citrulline contacts are provided by Arg-124, Ser-171, Ser-180, Glu-253, and Tyr-265.

This sequence belongs to the argininosuccinate synthase family. Type 1 subfamily. Homotetramer.

Its subcellular location is the cytoplasm. It carries out the reaction L-citrulline + L-aspartate + ATP = 2-(N(omega)-L-arginino)succinate + AMP + diphosphate + H(+). The protein operates within amino-acid biosynthesis; L-arginine biosynthesis; L-arginine from L-ornithine and carbamoyl phosphate: step 2/3. The chain is Argininosuccinate synthase from Saccharolobus solfataricus (strain ATCC 35092 / DSM 1617 / JCM 11322 / P2) (Sulfolobus solfataricus).